Here is a 172-residue protein sequence, read N- to C-terminus: 6,7-dimethyl-8-ribityllumazine synthase (172 aa).

Residues F22 and 56-58 (AFE) each bind 5-amino-6-(D-ribitylamino)uracil. 78 to 79 (LG) serves as a coordination point for (2S)-2-hydroxy-3-oxobutyl phosphate. 80–82 (AII) serves as a coordination point for 5-amino-6-(D-ribitylamino)uracil. H88 (proton donor) is an active-site residue. Residue F113 participates in 5-amino-6-(D-ribitylamino)uracil binding. R127 serves as a coordination point for (2S)-2-hydroxy-3-oxobutyl phosphate.

Belongs to the DMRL synthase family.

The enzyme catalyses (2S)-2-hydroxy-3-oxobutyl phosphate + 5-amino-6-(D-ribitylamino)uracil = 6,7-dimethyl-8-(1-D-ribityl)lumazine + phosphate + 2 H2O + H(+). It participates in cofactor biosynthesis; riboflavin biosynthesis; riboflavin from 2-hydroxy-3-oxobutyl phosphate and 5-amino-6-(D-ribitylamino)uracil: step 1/2. Functionally, catalyzes the formation of 6,7-dimethyl-8-ribityllumazine by condensation of 5-amino-6-(D-ribitylamino)uracil with 3,4-dihydroxy-2-butanone 4-phosphate. This is the penultimate step in the biosynthesis of riboflavin. In Protochlamydia amoebophila (strain UWE25), this protein is 6,7-dimethyl-8-ribityllumazine synthase.